Reading from the N-terminus, the 505-residue chain is 2,3-bisphosphoglycerate-independent phosphoglycerate mutase (505 aa).

Residues aspartate 12 and serine 62 each contribute to the Mn(2+) site. Serine 62 acts as the Phosphoserine intermediate in catalysis. Substrate-binding positions include histidine 123, 153 to 154 (RD), arginine 185, arginine 191, 257 to 260 (RPDR), and lysine 330. Residues aspartate 397, histidine 401, aspartate 438, histidine 439, and histidine 456 each contribute to the Mn(2+) site.

The protein belongs to the BPG-independent phosphoglycerate mutase family. Monomer. Requires Mn(2+) as cofactor.

It catalyses the reaction (2R)-2-phosphoglycerate = (2R)-3-phosphoglycerate. It functions in the pathway carbohydrate degradation; glycolysis; pyruvate from D-glyceraldehyde 3-phosphate: step 3/5. Its function is as follows. Catalyzes the interconversion of 2-phosphoglycerate and 3-phosphoglycerate. This Staphylococcus epidermidis (strain ATCC 35984 / DSM 28319 / BCRC 17069 / CCUG 31568 / BM 3577 / RP62A) protein is 2,3-bisphosphoglycerate-independent phosphoglycerate mutase.